The following is a 92-amino-acid chain: Small ribosomal subunit protein uS19c (92 aa).

Belongs to the universal ribosomal protein uS19 family.

The protein localises to the plastid. It is found in the chloroplast. Protein S19 forms a complex with S13 that binds strongly to the 16S ribosomal RNA. This Trieres chinensis (Marine centric diatom) protein is Small ribosomal subunit protein uS19c (rps19).